A 393-amino-acid polypeptide reads, in one-letter code: Cysteine protease ATG4B (393 aa).

Methionine 1 carries the post-translational modification N-acetylmethionine. Serine 34 is subject to Phosphoserine. Cysteine 74 acts as the Nucleophile in catalysis. Cysteine 189 is subject to S-nitrosocysteine. Active-site residues include aspartate 278 and histidine 280. S-nitrosocysteine occurs at positions 292 and 301. Cysteine 292 and cysteine 361 are disulfide-bonded. Phosphoserine is present on residues serine 316 and serine 383. The LIR signature appears at 388–391 (FEIL). Serine 392 bears the Phosphoserine mark.

It belongs to the peptidase C54 family. Interacts with PFKP; promoting phosphorylation of ATG4B at Ser-34. Interacts with GBP7. Phosphorylation at Ser-383 and Ser-392 promotes autophagy by increasing protein delipidation activity without affecting proteolytic activation of ATG8 proteins. Phosphorylation at Ser-316 by ULK1 inhibits autophagy by decreasing both proteolytic activation and delipidation activities. Phosphorylation at Ser-316 is dephosphorylated by protein phosphatase 2A (PP2A). Phosphorylation at Ser-34 by AKT2 promotes its hydrolase activity, leading to increased proteolytic activation and delipidation of ATG8 family proteins. Phosphorylation at Ser-34 by AKT1 promotes mitochondrial localization and inhibition of the F1F0-ATP synthase activity, leading to elevation of mitochondrial reactive oxygen species (ROS). In terms of processing, ubiquitinated by RNF5, leading to its degradation by the proteasome. Post-translationally, S-nitrosylation in response to high glucose decreases both proteolytic activation and delipidation activities. O-glycosylated by OGT, leading to increase protease activity, thereby promoting the proteolytic activation of ATG8 family proteins. In terms of processing, forms reversible intrachain disulfide bonds in response to oxidative stress. Forms interchain disulfide bonds, leading to formation of homooligomers in response to oxidation.

Its subcellular location is the cytoplasm. The protein resides in the cytosol. It is found in the cytoplasmic vesicle. It localises to the autophagosome. The protein localises to the endoplasmic reticulum. Its subcellular location is the mitochondrion. The enzyme catalyses [protein]-C-terminal L-amino acid-glycyl-phosphatidylethanolamide + H2O = [protein]-C-terminal L-amino acid-glycine + a 1,2-diacyl-sn-glycero-3-phosphoethanolamine. The catalysed reaction is [protein]-C-terminal L-amino acid-glycyl-phosphatidylserine + H2O = [protein]-C-terminal L-amino acid-glycine + a 1,2-diacyl-sn-glycero-3-phospho-L-serine. Its activity is regulated as follows. Inhibited by N-ethylmaleimide. Redox-regulated during autophagy since reducing conditions activate ATG4A whereas an oxidizing environment such as the presence of H(2)O(2) inhibits its activity. The cysteine protease activity compounds is inhibited by styrylquinoline compounds 4-28 and LV-320. Functionally, cysteine protease that plays a key role in autophagy by mediating both proteolytic activation and delipidation of ATG8 family proteins. Required for canonical autophagy (macroautophagy), non-canonical autophagy as well as for mitophagy. The protease activity is required for proteolytic activation of ATG8 family proteins: cleaves the C-terminal amino acid of ATG8 proteins MAP1LC3A, MAP1LC3B, MAP1LC3C, GABARAPL1, GABARAPL2 and GABARAP, to reveal a C-terminal glycine. Exposure of the glycine at the C-terminus is essential for ATG8 proteins conjugation to phosphatidylethanolamine (PE) and insertion to membranes, which is necessary for autophagy. Protease activity is also required to counteract formation of high-molecular weight conjugates of ATG8 proteins (ATG8ylation): acts as a deubiquitinating-like enzyme that removes ATG8 conjugated to other proteins, such as ATG3. In addition to the protease activity, also mediates delipidation of ATG8 family proteins. Catalyzes delipidation of PE-conjugated forms of ATG8 proteins during macroautophagy. Also involved in non-canonical autophagy, a parallel pathway involving conjugation of ATG8 proteins to single membranes at endolysosomal compartments, by catalyzing delipidation of ATG8 proteins conjugated to phosphatidylserine (PS). Compared to other members of the family (ATG4A, ATG4C or ATG4C), constitutes the major protein for proteolytic activation of ATG8 proteins, while it displays weaker delipidation activity than other ATG4 paralogs. Involved in phagophore growth during mitophagy independently of its protease activity and of ATG8 proteins: acts by regulating ATG9A trafficking to mitochondria and promoting phagophore-endoplasmic reticulum contacts during the lipid transfer phase of mitophagy. The sequence is that of Cysteine protease ATG4B from Rattus norvegicus (Rat).